A 31-amino-acid chain; its full sequence is Cytochrome b6-f complex subunit 6 (31 aa).

Residues 4–24 form a helical membrane-spanning segment; that stretch reads ITSYFGFLLAALTITSALLIG.

It belongs to the PetL family. The 4 large subunits of the cytochrome b6-f complex are cytochrome b6, subunit IV (17 kDa polypeptide, PetD), cytochrome f and the Rieske protein, while the 4 small subunits are PetG, PetL, PetM and PetN. The complex functions as a dimer.

It localises to the plastid. The protein resides in the chloroplast thylakoid membrane. Its function is as follows. Component of the cytochrome b6-f complex, which mediates electron transfer between photosystem II (PSII) and photosystem I (PSI), cyclic electron flow around PSI, and state transitions. PetL is important for photoautotrophic growth as well as for electron transfer efficiency and stability of the cytochrome b6-f complex. This chain is Cytochrome b6-f complex subunit 6, found in Piper cenocladum (Ant piper).